A 472-amino-acid chain; its full sequence is Probable endopolygalacturonase D (472 aa).

The N-terminal stretch at M1–A16 is a signal peptide. N-linked (GlcNAc...) asparagine glycosylation occurs at N24. C129 and C144 form a disulfide bridge. PbH1 repeat units follow at residues M236 to H258, T259 to S297, and S298 to S319. Residue N300 is glycosylated (N-linked (GlcNAc...) asparagine). The Proton donor role is filled by D312. A disulfide bridge connects residues C314 and C330. The active site involves H334. 4 PbH1 repeats span residues V349–S370, V378–Q400, T412–K433, and C444–D467. Residues N361, N385, and N419 are each glycosylated (N-linked (GlcNAc...) asparagine). 2 disulfides stabilise this stretch: C439/C444 and C462/C469.

This sequence belongs to the glycosyl hydrolase 28 family.

Its subcellular location is the secreted. The catalysed reaction is (1,4-alpha-D-galacturonosyl)n+m + H2O = (1,4-alpha-D-galacturonosyl)n + (1,4-alpha-D-galacturonosyl)m.. Functionally, involved in maceration and soft-rotting of plant tissue. Hydrolyzes the 1,4-alpha glycosidic bonds of de-esterified pectate in the smooth region of the plant cell wall. This is Probable endopolygalacturonase D (pgaD) from Neosartorya fischeri (strain ATCC 1020 / DSM 3700 / CBS 544.65 / FGSC A1164 / JCM 1740 / NRRL 181 / WB 181) (Aspergillus fischerianus).